The chain runs to 68 residues: KCNQ1 downstream neighbor protein (68 aa).

A disordered region spans residues 28 to 68 (GVASGCSPSKASQEARGKEKCPTLNGQPQWSALFTLPPQRE).

As to expression, shows reduced expression in Wilms' tumor samples.

The polypeptide is KCNQ1 downstream neighbor protein (KCNQ1DN) (Homo sapiens (Human)).